Here is a 178-residue protein sequence, read N- to C-terminus: C-phycoerythrin class 2 subunit beta (178 aa).

C50 and C61 together coordinate phycourobilin. (2R,3E)-phycoerythrobilin contacts are provided by C82 and C159.

It belongs to the phycobiliprotein family. Heterodimer of an alpha and a beta chain. In terms of processing, contains two covalently linked phycoerythrobilin chromophores and one covalently linked phycourobilin chromophore.

It is found in the cellular thylakoid membrane. Its function is as follows. Light-harvesting photosynthetic bile pigment-protein from the phycobiliprotein complex. In Synechococcus sp. (strain WH8103), this protein is C-phycoerythrin class 2 subunit beta (mpeB).